We begin with the raw amino-acid sequence, 1065 residues long: Valine--tRNA ligase, mitochondrial (1065 aa).

Residues 1-15 constitute a mitochondrion transit peptide; that stretch reads MPHLPLASFRPPLWG. Residues 27–52 form a disordered region; it reads ALCTQPEPHGSPVSRRNREAKQKRLR. Basic and acidic residues predominate over residues 42-52; sequence RNREAKQKRLR. Residues 146-156 carry the 'HIGH' region motif; it reads PNVTGSLHIGH. Positions 659 to 663 match the 'KMSKS' region motif; sequence KMSKS. Residue K662 participates in ATP binding.

Belongs to the class-I aminoacyl-tRNA synthetase family.

Its subcellular location is the mitochondrion. It carries out the reaction tRNA(Val) + L-valine + ATP = L-valyl-tRNA(Val) + AMP + diphosphate. Catalyzes the attachment of valine to tRNA(Val) in a two-step reaction: valine is first activated by ATP to form Val-AMP and then transferred to the acceptor end of tRNA(Val). This is Valine--tRNA ligase, mitochondrial (Vars2) from Rattus norvegicus (Rat).